A 492-amino-acid polypeptide reads, in one-letter code: Phytoene desaturase (lycopene-forming) (492 aa).

5–38 (TVIGAGFGGLALAIRLQAAGIPVLLLEQRDKPGG) contacts FAD.

It belongs to the carotenoid/retinoid oxidoreductase family. The cofactor is FAD.

It localises to the cell membrane. It carries out the reaction 15-cis-phytoene + 4 A = all-trans-lycopene + 4 AH2. Its pathway is carotenoid biosynthesis; lycopene biosynthesis. With respect to regulation, inhibited by NAD and NADP. Converts 15-cis-phytoene into all-trans-lycopene via the intermediary of all-trans-phytofluene, all-trans-zeta-carotene and all-trans-neurosporene, by the introduction of four double bonds. This Pantoea ananas (Erwinia uredovora) protein is Phytoene desaturase (lycopene-forming) (crtI).